The following is a 168-amino-acid chain: Phosphopantetheine adenylyltransferase (168 aa).

Thr-10 lines the substrate pocket. ATP is bound by residues 10-11 and His-18; that span reads TF. Residues Lys-42, Leu-75, and Arg-89 each contribute to the substrate site. ATP contacts are provided by residues 90 to 92, Glu-100, and 125 to 131; these read GVR and YTYVASS.

The protein belongs to the bacterial CoaD family. As to quaternary structure, homohexamer. Requires Mg(2+) as cofactor.

The protein resides in the cytoplasm. It carries out the reaction (R)-4'-phosphopantetheine + ATP + H(+) = 3'-dephospho-CoA + diphosphate. It participates in cofactor biosynthesis; coenzyme A biosynthesis; CoA from (R)-pantothenate: step 4/5. Functionally, reversibly transfers an adenylyl group from ATP to 4'-phosphopantetheine, yielding dephospho-CoA (dPCoA) and pyrophosphate. The sequence is that of Phosphopantetheine adenylyltransferase from Prosthecochloris aestuarii (strain DSM 271 / SK 413).